The sequence spans 305 residues: tRNA dimethylallyltransferase (305 aa).

9 to 16 (GPTASGKS) serves as a coordination point for ATP. Residue 11 to 16 (TASGKS) participates in substrate binding. The segment at 34 to 37 (DSKQ) is interaction with substrate tRNA.

It belongs to the IPP transferase family. Monomer. Mg(2+) is required as a cofactor.

It catalyses the reaction adenosine(37) in tRNA + dimethylallyl diphosphate = N(6)-dimethylallyladenosine(37) in tRNA + diphosphate. Its function is as follows. Catalyzes the transfer of a dimethylallyl group onto the adenine at position 37 in tRNAs that read codons beginning with uridine, leading to the formation of N6-(dimethylallyl)adenosine (i(6)A). This is tRNA dimethylallyltransferase from Anaplasma marginale (strain Florida).